The following is a 348-amino-acid chain: L-seryl-tRNA(Sec) kinase (348 aa).

Residue 25–32 (GLPAAGKS) participates in ATP binding.

Belongs to the L-seryl-tRNA(Sec) kinase family. The cofactor is Mg(2+).

It carries out the reaction L-seryl-tRNA(Sec) + ATP = O-phospho-L-seryl-tRNA(Sec) + ADP. The protein operates within aminoacyl-tRNA biosynthesis; selenocysteinyl-tRNA(Sec) biosynthesis; selenocysteinyl-tRNA(Sec) from L-seryl-tRNA(Sec) (archaeal/eukaryal route): step 1/2. Its function is as follows. Specifically phosphorylates seryl-tRNA(Sec) to O-phosphoseryl-tRNA(Sec), an activated intermediate for selenocysteine biosynthesis. This chain is L-seryl-tRNA(Sec) kinase (PSTK), found in Homo sapiens (Human).